We begin with the raw amino-acid sequence, 323 residues long: Putative HTH-type transcriptional regulatory protein Mbur_1811 (323 aa).

The region spanning 132–190 is the HTH cro/C1-type domain; that stretch reads LKEARMNVSMSLGALASELGVSRRTISKYEEGQMDASIDIVLHLEEILDMALAKSIDIL. Residues 143-162 constitute a DNA-binding region (H-T-H motif); sequence LGALASELGVSRRTISKYEE.

The polypeptide is Putative HTH-type transcriptional regulatory protein Mbur_1811 (Methanococcoides burtonii (strain DSM 6242 / NBRC 107633 / OCM 468 / ACE-M)).